The chain runs to 496 residues: Glutamyl-tRNA(Gln) amidotransferase subunit A (496 aa).

Residues K75 and S150 each act as charge relay system in the active site. Catalysis depends on S174, which acts as the Acyl-ester intermediate.

This sequence belongs to the amidase family. GatA subfamily. In terms of assembly, heterotrimer of A, B and C subunits.

It catalyses the reaction L-glutamyl-tRNA(Gln) + L-glutamine + ATP + H2O = L-glutaminyl-tRNA(Gln) + L-glutamate + ADP + phosphate + H(+). In terms of biological role, allows the formation of correctly charged Gln-tRNA(Gln) through the transamidation of misacylated Glu-tRNA(Gln) in organisms which lack glutaminyl-tRNA synthetase. The reaction takes place in the presence of glutamine and ATP through an activated gamma-phospho-Glu-tRNA(Gln). This chain is Glutamyl-tRNA(Gln) amidotransferase subunit A, found in Burkholderia ambifaria (strain MC40-6).